The primary structure comprises 174 residues: Large ribosomal subunit protein uL10 (174 aa).

This sequence belongs to the universal ribosomal protein uL10 family. As to quaternary structure, part of the ribosomal stalk of the 50S ribosomal subunit. The N-terminus interacts with L11 and the large rRNA to form the base of the stalk. The C-terminus forms an elongated spine to which L12 dimers bind in a sequential fashion forming a multimeric L10(L12)X complex.

In terms of biological role, forms part of the ribosomal stalk, playing a central role in the interaction of the ribosome with GTP-bound translation factors. The sequence is that of Large ribosomal subunit protein uL10 from Geobacter metallireducens (strain ATCC 53774 / DSM 7210 / GS-15).